Here is a 226-residue protein sequence, read N- to C-terminus: Small ribosomal subunit protein uS3 (226 aa).

Residues 39–107 (IRAYIKKNVV…EVTLNIKEVK (69 aa)) form the KH type-2 domain.

This sequence belongs to the universal ribosomal protein uS3 family. As to quaternary structure, part of the 30S ribosomal subunit. Forms a tight complex with proteins S10 and S14.

Binds the lower part of the 30S subunit head. Binds mRNA in the 70S ribosome, positioning it for translation. This chain is Small ribosomal subunit protein uS3, found in Pelagibacter ubique (strain HTCC1062).